A 132-amino-acid polypeptide reads, in one-letter code: Glycine cleavage system H protein (132 aa).

One can recognise a Lipoyl-binding domain in the interval 24 to 107; sequence TATIGLSAFA…GEEGWLIKVR (84 aa). At Lys-65 the chain carries N6-lipoyllysine.

It belongs to the GcvH family. As to quaternary structure, the glycine cleavage system is composed of four proteins: P, T, L and H. Requires (R)-lipoate as cofactor.

Its function is as follows. The glycine cleavage system catalyzes the degradation of glycine. The H protein shuttles the methylamine group of glycine from the P protein to the T protein. The polypeptide is Glycine cleavage system H protein (Synechocystis sp. (strain ATCC 27184 / PCC 6803 / Kazusa)).